Here is a 299-residue protein sequence, read N- to C-terminus: Protease HtpX homolog (299 aa).

The next 2 helical transmembrane spans lie at 15 to 35 and 37 to 57; these read MFLT…VLWQ and GVSY…QYYF. A Zn(2+)-binding site is contributed by His-140. Glu-141 is an active-site residue. His-144 lines the Zn(2+) pocket. 2 helical membrane-spanning segments follow: residues 158–178 and 187–207; these read FFAT…GAFG and NNIM…YFLI. Glu-215 contacts Zn(2+).

The protein belongs to the peptidase M48B family. The cofactor is Zn(2+).

It localises to the cell membrane. The protein is Protease HtpX homolog of Moorella thermoacetica (strain ATCC 39073 / JCM 9320).